We begin with the raw amino-acid sequence, 74 residues long: Delta-stichotoxin-Sgt2a (74 aa).

Residues 1–19 (MNRLIILVFAAVFLTLASA) form the signal peptide. A propeptide spanning residues 20–28 (EVSEDVNMA) is cleaved from the precursor. Intrachain disulfides connect C34–C71, C36–C64, and C57–C72.

This sequence belongs to the sea anemone sodium channel inhibitory toxin family. Type I subfamily.

The protein localises to the secreted. Its subcellular location is the nematocyst. Its function is as follows. Binds specifically to voltage-gated sodium channels (Nav), thereby delaying their inactivation during signal transduction. This is Delta-stichotoxin-Sgt2a from Stichodactyla gigantea (Giant carpet anemone).